The following is a 219-amino-acid chain: MTESHIDFRRAKFLISAPDIAHLDQYLPGDVGVEIAFAGRSNAGKSSALNALTEQKSLARTSKTPGRTQLINVFELDSQRRLVDLPGYGFAQVPLAMKNKWQQALGEYLQKRACLSGVVVLMDIRHPLKDLDMQMIEWAVASEIPVLALLTKSDKLAQSAKMKTVNEVRKALADFGDWVLVEPFSALKGTGKPKVLSILNEWCHPQWLRDELDTAEQSN.

In terms of domain architecture, EngB-type G spans 31–205 (VGVEIAFAGR…LSILNEWCHP (175 aa)). GTP contacts are provided by residues 39-46 (GRSNAGKS), 66-70 (GRTQL), 84-87 (DLPG), 151-154 (TKSD), and 184-186 (FSA). The Mg(2+) site is built by serine 46 and threonine 68.

Belongs to the TRAFAC class TrmE-Era-EngA-EngB-Septin-like GTPase superfamily. EngB GTPase family. It depends on Mg(2+) as a cofactor.

Necessary for normal cell division and for the maintenance of normal septation. The sequence is that of Probable GTP-binding protein EngB from Shewanella putrefaciens (strain CN-32 / ATCC BAA-453).